The following is a 66-amino-acid chain: Beta-defensin 13 (66 aa).

An N-terminal signal peptide occupies residues 1–22; it reads MRIFSLIVAGLVLLIQLHPAKG. Disulfide bonds link C30/C59, C37/C51, and C41/C60.

This sequence belongs to the beta-defensin family.

The protein resides in the secreted. Has antibacterial activity. The sequence is that of Beta-defensin 13 (Defb13) from Rattus norvegicus (Rat).